Here is a 383-residue protein sequence, read N- to C-terminus: S-adenosylmethionine synthase (383 aa).

Residue H15 participates in ATP binding. Position 17 (D17) interacts with Mg(2+). E43 contributes to the K(+) binding site. L-methionine-binding residues include E56 and Q99. The segment at 99–109 is flexible loop; sequence QSPDINQGVDR. ATP contacts are provided by residues 164–166, 230–231, D239, 245–246, A262, and K266; these read DAK, RF, and RK. D239 provides a ligand contact to L-methionine. K270 provides a ligand contact to L-methionine.

This sequence belongs to the AdoMet synthase family. Homotetramer; dimer of dimers. The cofactor is Mg(2+). Requires K(+) as cofactor.

It is found in the cytoplasm. The catalysed reaction is L-methionine + ATP + H2O = S-adenosyl-L-methionine + phosphate + diphosphate. Its pathway is amino-acid biosynthesis; S-adenosyl-L-methionine biosynthesis; S-adenosyl-L-methionine from L-methionine: step 1/1. In terms of biological role, catalyzes the formation of S-adenosylmethionine (AdoMet) from methionine and ATP. The overall synthetic reaction is composed of two sequential steps, AdoMet formation and the subsequent tripolyphosphate hydrolysis which occurs prior to release of AdoMet from the enzyme. The chain is S-adenosylmethionine synthase from Shewanella loihica (strain ATCC BAA-1088 / PV-4).